The following is a 289-amino-acid chain: Agroclavine dehydrogenase (289 aa).

It belongs to the fgaFS/easG family. In terms of assembly, monomer.

The enzyme catalyses agroclavine + NADP(+) = didehydroagroclavine + NADPH + H(+). The protein operates within alkaloid biosynthesis; ergot alkaloid biosynthesis. Agroclavine dehydrogenase; part of the gene cluster that mediates the biosynthesis of fungal ergot alkaloid ergovaline, the predominant ergopeptine product in E.festucae var. lolii. DmaW catalyzes the first step of ergot alkaloid biosynthesis by condensing dimethylallyl diphosphate (DMAP) and tryptophan to form 4-dimethylallyl-L-tryptophan. The second step is catalyzed by the methyltransferase easF that methylates 4-dimethylallyl-L-tryptophan in the presence of S-adenosyl-L-methionine, resulting in the formation of 4-dimethylallyl-L-abrine. The catalase easC and the FAD-dependent oxidoreductase easE then transform 4-dimethylallyl-L-abrine to chanoclavine-I which is further oxidized by easD in the presence of NAD(+), resulting in the formation of chanoclavine-I aldehyde. Agroclavine dehydrogenase easG then mediates the conversion of chanoclavine-I aldehyde to agroclavine via a non-enzymatic adduct reaction: the substrate is an iminium intermediate that is formed spontaneously from chanoclavine-I aldehyde in the presence of glutathione. Further conversion of agroclavine to paspalic acid is a two-step process involving oxidation of agroclavine to elymoclavine and of elymoclavine to paspalic acid, the second step being performed by the elymoclavine oxidase cloA. However, cloA does not encode a functional enzyme indicating that C.fusiformis terminates its ergot alkaloid pathway at elymoclavine. The polypeptide is Agroclavine dehydrogenase (Claviceps fusiformis (Ergot fungus)).